An 833-amino-acid polypeptide reads, in one-letter code: MTASPDPAQRIDALRQRIEDANYRYHVLDEPQIADVEYDRLLRELEALEAAHPELATADSPTQRVGYLAASRFAEVRHVLPMLSLGNAFSDEEVAEFVRRISERLERKQPVFCAEPKLDGLAISLRYEQGEFVQGATRGDGATGEDVSANLRTVKAIPLRLRGTGWPEVLEVRGEVYMPRAAFEAYNAQMRLQGGKVLANPRNGAAGSLRQLDARITAQRPLSFFAYGVGEVADGALPPTHSTMLAQLREWGFPVSQLVEVVQGSEGLLTYYRRIGEARDGLPFDIDGVVYKLDDLAGQREMGFVSRAPRWALAHKFPAQEQSTTVEAIEIQIGRTGAATPVARLKPVHVAGVVVTNATLHNADQIARLDVRVGDTVIVRRAGDVIPEVAGVVAEQRPAGTHAWQMPTQCPVCGSEIVREEGQAVWRCSGELTCPAQRKEAFRHFVSRRAMDVDGLGEKFIEVLVDSGVVQGVADLYLLNVDQLLQLRLISTADSPHAFLREAREHLAAGAYAQVEQTMVGIGVDLAGVQPAPQTWQADLLRAGLPAFDWNRKKIATKWAENLIEAIETSRDTTLERFLFALGIEHVGESTAKALSAWFGELDVIRHLPWPLFKRVPDIGGEVARSLGHFFDQAGNQQAIDDLLQRGVRIGDAHPPSPKLRGALSFAVLLEDLDIPKVTPVRAQQLAAATASFDALIASEADPLLQAGVPAPVIASLQQWLARPENAALATAAQRAMDALLAQLPQADAVQAGPLDGQTVVITGTLAALTRDAAKQRLESLGAKVAGSVSKKTAFLVAGEEAGSKLDKAQSLGVEIWDEARLLAFLSEHGQAV.

Residues 35-39, 84-85, and Glu115 each bind NAD(+); these read DVEYD and SL. Lys117 serves as the catalytic N6-AMP-lysine intermediate. NAD(+)-binding residues include Arg138, Glu175, Lys292, and Lys316. The Zn(2+) site is built by Cys410, Cys413, Cys428, and Cys434. The 84-residue stretch at 750 to 833 folds into the BRCT domain; it reads VQAGPLDGQT…AFLSEHGQAV (84 aa).

This sequence belongs to the NAD-dependent DNA ligase family. LigA subfamily. Requires Mg(2+) as cofactor. Mn(2+) serves as cofactor.

It catalyses the reaction NAD(+) + (deoxyribonucleotide)n-3'-hydroxyl + 5'-phospho-(deoxyribonucleotide)m = (deoxyribonucleotide)n+m + AMP + beta-nicotinamide D-nucleotide.. DNA ligase that catalyzes the formation of phosphodiester linkages between 5'-phosphoryl and 3'-hydroxyl groups in double-stranded DNA using NAD as a coenzyme and as the energy source for the reaction. It is essential for DNA replication and repair of damaged DNA. In Xanthomonas campestris pv. campestris (strain 8004), this protein is DNA ligase.